We begin with the raw amino-acid sequence, 345 residues long: MISPVLILFSSFLCHVAIAGRTCPKPDDLPFSTVVPLKTFYEPGEEITYSCKPGYVSRGGMRKFICPLTGLWPINTLKCTPRVCPFAGILENGAVRYTTFEYPNTISFSCNTGFYLNGADSAKCTEEGKWSPELPVCAPIICPPPSIPTFATLRVYKPSAGNNSLYRDTAVFECLPQHAMFGNDTITCTTHGNWTKLPECREVKCPFPSRPDNGFVNYPAKPTLYYKDKATFGCHDGYSLDGPEEIECTKLGNWSAMPSCKASCKVPVKKATVVYQGERVKIQEKFKNGMLHGDKVSFFCKNKEKKCSYTEDAQCIDGTIEVPKCFKEHSSLAFWKTDASDVKPC.

The signal sequence occupies residues 1–19 (MISPVLILFSSFLCHVAIA). Sushi domains follow at residues 21–81 (RTCP…KCTP), 82–139 (RVCP…VCAP), 140–202 (IICP…ECRE), and 203–262 (VKCP…SCKA). Cystine bridges form between C23-C66, C51-C79, C84-C124, C110-C137, C142-C188, C174-C200, C205-C248, C234-C260, C264-C315, C300-C325, and C307-C345. An O-linked (GalNAc...) threonine glycan is attached at T33. O-linked (GalNAc...) threonine glycosylation is present at T149. N-linked (GlcNAc...) (complex) asparagine glycosylation occurs at N162. N-linked (GlcNAc...) asparagine glycosylation is found at N183 and N193. N253 carries N-linked (GlcNAc...) asparagine glycosylation. Residues 263 to 345 (SCKVPVKKAT…KTDASDVKPC (83 aa)) are sushi-like.

N- and O-glycosylated. PubMed:6587378 also reports glycosylation on 'Asn-188' for their allele. As to expression, expressed by the liver and secreted in plasma.

It is found in the secreted. Functionally, binds to various kinds of negatively charged substances such as heparin, phospholipids, and dextran sulfate. May prevent activation of the intrinsic blood coagulation cascade by binding to phospholipids on the surface of damaged cells. The sequence is that of Beta-2-glycoprotein 1 (APOH) from Homo sapiens (Human).